Consider the following 216-residue polypeptide: Adenylate kinase (216 aa).

10–15 (GAGKGT) contacts ATP. The NMP stretch occupies residues 30–59 (STGDIFRKNISNKTPLGMEAKSYMDKGQLV). Residues T31, R36, 57-59 (QLV), 85-88 (GFPR), and Q92 contribute to the AMP site. The segment at 126-163 (GRRVCGECGASYHIKFITPKTEGVCDLCGGKLVQRKDD) is LID. An ATP-binding site is contributed by R127. Zn(2+) contacts are provided by C130 and C133. Residue 136–137 (SY) participates in ATP binding. Positions 150 and 153 each coordinate Zn(2+). Residues R160 and R171 each contribute to the AMP site. K199 serves as a coordination point for ATP.

This sequence belongs to the adenylate kinase family. As to quaternary structure, monomer.

The protein resides in the cytoplasm. The enzyme catalyses AMP + ATP = 2 ADP. The protein operates within purine metabolism; AMP biosynthesis via salvage pathway; AMP from ADP: step 1/1. Functionally, catalyzes the reversible transfer of the terminal phosphate group between ATP and AMP. Plays an important role in cellular energy homeostasis and in adenine nucleotide metabolism. This Clostridium tetani (strain Massachusetts / E88) protein is Adenylate kinase.